A 156-amino-acid chain; its full sequence is Ribosomal RNA large subunit methyltransferase H (156 aa).

S-adenosyl-L-methionine-binding positions include Leu-73, Gly-104, and 123 to 128 (IGPLTL).

This sequence belongs to the RNA methyltransferase RlmH family. In terms of assembly, homodimer.

Its subcellular location is the cytoplasm. The enzyme catalyses pseudouridine(1915) in 23S rRNA + S-adenosyl-L-methionine = N(3)-methylpseudouridine(1915) in 23S rRNA + S-adenosyl-L-homocysteine + H(+). In terms of biological role, specifically methylates the pseudouridine at position 1915 (m3Psi1915) in 23S rRNA. The polypeptide is Ribosomal RNA large subunit methyltransferase H (Xanthomonas axonopodis pv. citri (strain 306)).